The following is a 320-amino-acid chain: tRNA dimethylallyltransferase (320 aa).

17 to 24 lines the ATP pocket; it reads GPTASGKT. Residue 19–24 participates in substrate binding; the sequence is TASGKT. Interaction with substrate tRNA stretches follow at residues 42–45, 166–170, and 249–254; these read DSAL, QRIQR, and RCVGYR.

This sequence belongs to the IPP transferase family. Monomer. The cofactor is Mg(2+).

It catalyses the reaction adenosine(37) in tRNA + dimethylallyl diphosphate = N(6)-dimethylallyladenosine(37) in tRNA + diphosphate. Catalyzes the transfer of a dimethylallyl group onto the adenine at position 37 in tRNAs that read codons beginning with uridine, leading to the formation of N6-(dimethylallyl)adenosine (i(6)A). This chain is tRNA dimethylallyltransferase, found in Herminiimonas arsenicoxydans.